The chain runs to 100 residues: NADH-quinone oxidoreductase subunit K (100 aa).

Transmembrane regions (helical) follow at residues 4 to 24 (LQHGLLLAAILFVLGLTGLVI), 28 to 48 (LLFMLISLEIMINASALAFVV), and 60 to 80 (VMYILAITLAAAEASIGLALL).

Belongs to the complex I subunit 4L family. In terms of assembly, NDH-1 is composed of 13 different subunits. Subunits NuoA, H, J, K, L, M, N constitute the membrane sector of the complex.

It is found in the cell inner membrane. It catalyses the reaction a quinone + NADH + 5 H(+)(in) = a quinol + NAD(+) + 4 H(+)(out). In terms of biological role, NDH-1 shuttles electrons from NADH, via FMN and iron-sulfur (Fe-S) centers, to quinones in the respiratory chain. The immediate electron acceptor for the enzyme in this species is believed to be ubiquinone. Couples the redox reaction to proton translocation (for every two electrons transferred, four hydrogen ions are translocated across the cytoplasmic membrane), and thus conserves the redox energy in a proton gradient. The protein is NADH-quinone oxidoreductase subunit K of Musicola paradisiaca (strain Ech703) (Dickeya paradisiaca).